The chain runs to 146 residues: D-aminoacyl-tRNA deacylase (146 aa).

Residues 137-138 (GP) carry the Gly-cisPro motif, important for rejection of L-amino acids motif.

This sequence belongs to the DTD family. Homodimer.

The protein resides in the cytoplasm. It carries out the reaction glycyl-tRNA(Ala) + H2O = tRNA(Ala) + glycine + H(+). It catalyses the reaction a D-aminoacyl-tRNA + H2O = a tRNA + a D-alpha-amino acid + H(+). An aminoacyl-tRNA editing enzyme that deacylates mischarged D-aminoacyl-tRNAs. Also deacylates mischarged glycyl-tRNA(Ala), protecting cells against glycine mischarging by AlaRS. Acts via tRNA-based rather than protein-based catalysis; rejects L-amino acids rather than detecting D-amino acids in the active site. By recycling D-aminoacyl-tRNA to D-amino acids and free tRNA molecules, this enzyme counteracts the toxicity associated with the formation of D-aminoacyl-tRNA entities in vivo and helps enforce protein L-homochirality. The polypeptide is D-aminoacyl-tRNA deacylase (Bacillus cereus (strain Q1)).